We begin with the raw amino-acid sequence, 696 residues long: C2 domain-containing protein 2 (696 aa).

A helical membrane pass occupies residues 13–33; sequence AQWLALVSLFVAALATVGLYL. The 192-residue stretch at 51–242 folds into the SMP-LBD domain; that stretch reads EPGEGPRPGS…PTTVKEAQNL (192 aa). Phosphoserine is present on serine 60. The C2 domain maps to 245–362; it reads AASTAQESCP…KKQPSGPQSF (118 aa). Serine 435 and serine 441 each carry phosphoserine. Threonine 445 is modified (phosphothreonine). The disordered stretch occupies residues 539–580; sequence VDSTHQEDAPSHPERAAASAPPEEAESAQASLAPKPQEDELD. Residues 542–553 show a composition bias toward basic and acidic residues; it reads THQEDAPSHPER. The span at 554-572 shows a compositional bias: low complexity; that stretch reads AAASAPPEEAESAQASLAP. Serine 581 carries the post-translational modification Phosphoserine.

The protein localises to the membrane. The polypeptide is C2 domain-containing protein 2 (C2CD2) (Homo sapiens (Human)).